The sequence spans 348 residues: GTPase Obg (348 aa).

The 159-residue stretch at 1 to 159 (MKFVDEVKVH…RELVLELKLM (159 aa)) folds into the Obg domain. The 172-residue stretch at 160 to 331 (ADVGLVGLPN…LLSALVRILS (172 aa)) folds into the OBG-type G domain. GTP-binding positions include 166–173 (GLPNAGKS), 191–195 (FTTLI), 213–216 (DIPG), 283–286 (NKVD), and 312–314 (SAR). Mg(2+) is bound by residues serine 173 and threonine 193.

The protein belongs to the TRAFAC class OBG-HflX-like GTPase superfamily. OBG GTPase family. In terms of assembly, monomer. It depends on Mg(2+) as a cofactor.

Its subcellular location is the cytoplasm. Its function is as follows. An essential GTPase which binds GTP, GDP and possibly (p)ppGpp with moderate affinity, with high nucleotide exchange rates and a fairly low GTP hydrolysis rate. Plays a role in control of the cell cycle, stress response, ribosome biogenesis and in those bacteria that undergo differentiation, in morphogenesis control. In Syntrophobacter fumaroxidans (strain DSM 10017 / MPOB), this protein is GTPase Obg.